We begin with the raw amino-acid sequence, 986 residues long: Ubiquitin carboxyl-terminal hydrolase 37 (986 aa).

The KEN box 1 motif lies at 32–34 (KDN). 2 consecutive short sequence motifs (D-box) follow at residues 71–79 (CLMLTLKDT) and 96–105 (RMYLDAVHQD). 2 disordered regions span residues 134 to 238 (NRQF…MSDP) and 251 to 305 (LKLK…KRSL). The segment covering 149 to 159 (VTVESKDETPF) has biased composition (basic and acidic residues). The short motif at 160-168 (RKVLGTPAR) is the D-box 3 element. Positions 171 to 195 (VKNSSGTGAPSNRVNVAASPTSSVP) are enriched in polar residues. A KEN box 2 motif is present at residues 224–226 (KEN). Residues 251-260 (LKLKQEEENR) are compositionally biased toward basic and acidic residues. Low complexity predominate over residues 269–298 (SSSYYGSRSSSKEYSTSSSTLDRSSVSSQT). One can recognise a USP domain in the interval 344-958 (QGFSNLGNTC…SGYIFFYMHK (615 aa)). The active-site Nucleophile is C353. Disordered stretches follow at residues 683–710 (VQRGIRKSSKRSKMEGDKPELGNAGFDG) and 729–751 (SLSLSHDEDKPTSSPDTGFGDDE). One can recognise a UIM 1 domain in the interval 712–731 (SEDELLAAVLEISKREASLS). A compositionally biased stretch (basic and acidic residues) spans 729 to 739 (SLSLSHDEDKP). A KEN box 3 motif is present at residues 789–791 (KEN). Positions 811 to 840 (REREEQELQQALAQSLQEQEAREQKEDDDL) are disordered. UIM domains are found at residues 813-832 (REEQELQQALAQSLQEQEAR) and 835-854 (KEDDDLKRATELSLQEFNSS). The segment covering 818–828 (LQQALAQSLQE) has biased composition (low complexity). The span at 829–840 (QEAREQKEDDDL) shows a compositional bias: basic and acidic residues. The Proton acceptor role is filled by H913.

The protein belongs to the peptidase C19 family.

It carries out the reaction Thiol-dependent hydrolysis of ester, thioester, amide, peptide and isopeptide bonds formed by the C-terminal Gly of ubiquitin (a 76-residue protein attached to proteins as an intracellular targeting signal).. Deubiquitinase that antagonizes the anaphase-promoting complex (APC/C) during G1/S transition by mediating deubiquitination of APC/C target proteins, thereby promoting S phase entry. Specifically mediates deubiquitination of 'Lys-11'-linked polyubiquitin chains, a specific ubiquitin-linkage type mediated by the APC/C complex. This Gallus gallus (Chicken) protein is Ubiquitin carboxyl-terminal hydrolase 37 (USP37).